Here is a 315-residue protein sequence, read N- to C-terminus: Transaldolase (315 aa).

Lys-125 serves as the catalytic Schiff-base intermediate with substrate.

This sequence belongs to the transaldolase family. Type 1 subfamily. As to quaternary structure, homodimer.

The protein resides in the cytoplasm. It catalyses the reaction D-sedoheptulose 7-phosphate + D-glyceraldehyde 3-phosphate = D-erythrose 4-phosphate + beta-D-fructose 6-phosphate. It participates in carbohydrate degradation; pentose phosphate pathway; D-glyceraldehyde 3-phosphate and beta-D-fructose 6-phosphate from D-ribose 5-phosphate and D-xylulose 5-phosphate (non-oxidative stage): step 2/3. In terms of biological role, transaldolase is important for the balance of metabolites in the pentose-phosphate pathway. The chain is Transaldolase from Polaromonas naphthalenivorans (strain CJ2).